The primary structure comprises 267 residues: MSHYPASGTWQACPKCGRHVHQRQWGTYQQCPYCHYWQRLTTAQRLEQLVDEGSFQPLTMTERPVNQLGFPDYMNKLRRAQRQTGLNEAVVCGTALIEQQPCILAVMDSHFMMGTLNTAVTRRLLHASEQARAQRLPLIIVTASGGARMQEGVYALVGMNLILAELARLAATPLPLITVLTDPTMGGVSASFAFKGDLIIAEAGAKIGFAGARVIQQTLPVKLPADFQTADQLFKNGMVDAVVERPQLRSTLGQALVNYGIGRSAHG.

One can recognise a CoA carboxyltransferase N-terminal domain in the interval 9 to 267 (TWQACPKCGR…NYGIGRSAHG (259 aa)). The Zn(2+) site is built by C13, C16, C31, and C34. A C4-type zinc finger spans residues 13–34 (CPKCGRHVHQRQWGTYQQCPYC).

The protein belongs to the AccD/PCCB family. As to quaternary structure, acetyl-CoA carboxylase is a heterohexamer composed of biotin carboxyl carrier protein (AccB), biotin carboxylase (AccC) and two subunits each of ACCase subunit alpha (AccA) and ACCase subunit beta (AccD). Requires Zn(2+) as cofactor.

The protein resides in the cytoplasm. The catalysed reaction is N(6)-carboxybiotinyl-L-lysyl-[protein] + acetyl-CoA = N(6)-biotinyl-L-lysyl-[protein] + malonyl-CoA. The protein operates within lipid metabolism; malonyl-CoA biosynthesis; malonyl-CoA from acetyl-CoA: step 1/1. Its function is as follows. Component of the acetyl coenzyme A carboxylase (ACC) complex. Biotin carboxylase (BC) catalyzes the carboxylation of biotin on its carrier protein (BCCP) and then the CO(2) group is transferred by the transcarboxylase to acetyl-CoA to form malonyl-CoA. This Lactiplantibacillus plantarum (strain ATCC BAA-793 / NCIMB 8826 / WCFS1) (Lactobacillus plantarum) protein is Acetyl-coenzyme A carboxylase carboxyl transferase subunit beta 1.